The chain runs to 120 residues: Small ribosomal subunit protein bS16 (120 aa).

The disordered stretch occupies residues 80-120; it reads GLKKRPARNNPHKGEPGKKAQERIAAAKQAAEDAKAAEASA. Positions 81–90 are enriched in basic residues; the sequence is LKKRPARNNP. Composition is skewed to basic and acidic residues over residues 91 to 101 and 109 to 120; these read HKGEPGKKAQE and AAEDAKAAEASA.

It belongs to the bacterial ribosomal protein bS16 family.

The polypeptide is Small ribosomal subunit protein bS16 (Bartonella bacilliformis (strain ATCC 35685 / KC583 / Herrer 020/F12,63)).